Reading from the N-terminus, the 233-residue chain is GSK-3-binding protein FRAT2 (233 aa).

The segment at 1 to 24 (MPCRREEEEEAGEEAEGEEEEDDS) is disordered. The span at 7 to 24 (EEEEAGEEAEGEEEEDDS) shows a compositional bias: acidic residues. Residues 174-196 (DPHRLLQQLVLSGNLIKEAVRRL) form an involved in GSK-3 binding region. Residues 204–233 (AATGPASAPGPGGGRSGPDRIALQPSGSLL) form a disordered region.

It belongs to the GSK-3-binding protein family. Binds GSK-3 and prevents GSK-3-dependent phosphorylation.

Its function is as follows. Positively regulates the Wnt signaling pathway by stabilizing beta-catenin through the association with GSK-3. The sequence is that of GSK-3-binding protein FRAT2 (FRAT2) from Homo sapiens (Human).